Here is a 382-residue protein sequence, read N- to C-terminus: D-galactonate dehydratase (382 aa).

Asp183 is a binding site for Mg(2+). The active-site Proton donor is the His185. Glu209 and Glu235 together coordinate Mg(2+). Residue His285 is the Proton acceptor of the active site.

The protein belongs to the mandelate racemase/muconate lactonizing enzyme family. GalD subfamily. It depends on Mg(2+) as a cofactor.

It catalyses the reaction D-galactonate = 2-dehydro-3-deoxy-D-galactonate + H2O. It participates in carbohydrate acid metabolism; D-galactonate degradation; D-glyceraldehyde 3-phosphate and pyruvate from D-galactonate: step 1/3. Catalyzes the dehydration of D-galactonate to 2-keto-3-deoxy-D-galactonate. In Klebsiella pneumoniae (strain 342), this protein is D-galactonate dehydratase.